A 592-amino-acid polypeptide reads, in one-letter code: Arginine--tRNA ligase (592 aa).

The 'HIGH' region signature appears at 112 to 122; it reads VNPNKELHVGH.

Belongs to the class-I aminoacyl-tRNA synthetase family. As to quaternary structure, monomer.

It is found in the cytoplasm. The catalysed reaction is tRNA(Arg) + L-arginine + ATP = L-arginyl-tRNA(Arg) + AMP + diphosphate. The protein is Arginine--tRNA ligase of Thermus thermophilus (strain ATCC 27634 / DSM 579 / HB8).